We begin with the raw amino-acid sequence, 414 residues long: Carboxyl-terminal-processing protease (414 aa).

A signal peptide spans 1-29; the sequence is MLRKRLQAGLCSLLLVLVLVFGPMERAIA. In terms of domain architecture, PDZ spans 100 to 184; that stretch reads YRSLKVSTSG…STVSLTVKSP (85 aa). Residues Ser-310, Asp-321, and Lys-335 each act as charge relay system in the active site.

Belongs to the peptidase S41A family.

The protein resides in the cellular thylakoid lumen. The enzyme catalyses The enzyme shows specific recognition of a C-terminal tripeptide, Xaa-Yaa-Zaa, in which Xaa is preferably Ala or Leu, Yaa is preferably Ala or Tyr, and Zaa is preferably Ala, but then cleaves at a variable distance from the C-terminus. A typical cleavage is -Ala-Ala-|-Arg-Ala-Ala-Lys-Glu-Asn-Tyr-Ala-Leu-Ala-Ala.. Functionally, cleavage of the 16 C-terminal residues from the D1 precursor of photosystem II (PSII). This proteolytic processing is necessary to allow the light-driven assembly of the oxygen-evolving cluster (a tetranuclear manganese), which is responsible for photosynthetic water oxidation. The polypeptide is Carboxyl-terminal-processing protease (ctpA) (Picosynechococcus sp. (strain ATCC 27264 / PCC 7002 / PR-6) (Agmenellum quadruplicatum)).